Consider the following 212-residue polypeptide: MAARRGALIVLEGVDRAGKSTQSRKLVEALCAAGHRAELLRFPERSTEIGKLLSSYLQKKSDVEDHSVHLLFSANRWEQVPLIKEKLSQGVTLVVDRYAFSGVAFTGAKENFSLDWCKQPDVGLPKPDLVLFLQLQLADAAKRGAFGHERYENGAFQERALRCFHQLMKDTTLNWKMVDASKSIEAVHEDIRVLSEDAIRTATEKPLGELWK.

Alanine 2 is subject to N-acetylalanine. ATP-binding positions include 16–21 and arginine 97; that span reads RAGKST. The LID stretch occupies residues 133-157; it reads LQLQLADAAKRGAFGHERYENGAFQ. Lysine 169 is modified (N6-acetyllysine). Residues lysine 182 and arginine 192 each coordinate ATP.

Belongs to the thymidylate kinase family. As to quaternary structure, homodimer. Mg(2+) serves as cofactor.

The catalysed reaction is dTMP + ATP = dTDP + ADP. It participates in pyrimidine metabolism; dTTP biosynthesis. Functionally, catalyzes the phosphorylation of thymidine monophosphate (dTMP) to thymidine diphosphate (dTDP), the immediate precursor for the DNA building block dTTP, with ATP as the preferred phosphoryl donor in the presence of Mg(2+). The polypeptide is Thymidylate kinase (DTYMK) (Homo sapiens (Human)).